The primary structure comprises 308 residues: Ribosomal RNA large subunit methyltransferase F (308 aa).

The protein belongs to the methyltransferase superfamily. METTL16/RlmF family.

The protein resides in the cytoplasm. It catalyses the reaction adenosine(1618) in 23S rRNA + S-adenosyl-L-methionine = N(6)-methyladenosine(1618) in 23S rRNA + S-adenosyl-L-homocysteine + H(+). In terms of biological role, specifically methylates the adenine in position 1618 of 23S rRNA. The polypeptide is Ribosomal RNA large subunit methyltransferase F (Escherichia fergusonii (strain ATCC 35469 / DSM 13698 / CCUG 18766 / IAM 14443 / JCM 21226 / LMG 7866 / NBRC 102419 / NCTC 12128 / CDC 0568-73)).